The following is a 122-amino-acid chain: Large ribosomal subunit protein uL14 (122 aa).

It belongs to the universal ribosomal protein uL14 family. As to quaternary structure, part of the 50S ribosomal subunit. Forms a cluster with proteins L3 and L19. In the 70S ribosome, L14 and L19 interact and together make contacts with the 16S rRNA in bridges B5 and B8.

Its function is as follows. Binds to 23S rRNA. Forms part of two intersubunit bridges in the 70S ribosome. This chain is Large ribosomal subunit protein uL14, found in Rickettsia rickettsii (strain Iowa).